The sequence spans 858 residues: Ubiquitin carboxyl-terminal hydrolase 5 (858 aa).

Ala2 carries the post-translational modification N-acetylalanine. The tract at residues 74 to 96 is disordered; the sequence is RRTRRPKEEDPTTGTGDPPRKKP. Lys113 participates in a covalent cross-link: Glycyl lysine isopeptide (Lys-Gly) (interchain with G-Cter in SUMO). A phosphoserine mark is found at Ser149 and Ser156. The segment at 175-283 adopts a UBP-type; degenerate zinc-finger fold; it reads QVSKHAFSLK…EHLSHFGIDM (109 aa). A disulfide bond links Cys195 and Cys816. 2 residues coordinate Zn(2+): Cys199 and Cys202. Trp209 serves as a coordination point for substrate. Residue Cys219 participates in Zn(2+) binding. 221–224 serves as a coordination point for substrate; the sequence is RRYF. Position 232 (His232) interacts with Zn(2+). Residues Tyr259, Tyr261, and Asp264 each contribute to the substrate site. Position 292 is a phosphothreonine (Thr292). The region spanning 326-856 is the USP domain; sequence TGIRNLGNSC…LGYIYFYQRV (531 aa). The Nucleophile role is filled by Cys335. Phosphothreonine is present on Thr623. UBA domains follow at residues 654–695 and 722–762; these read MLDE…VMSH and PPPE…IFSH. A phosphoserine mark is found at Ser779, Ser783, and Ser785. His818 acts as the Proton acceptor in catalysis.

Belongs to the peptidase C19 family. In terms of assembly, homodimer. Interacts with TRIML1. In terms of processing, ubiquitinated by SMURF1; leading to proteasomal degradation. SUMOylated at Lys-113; SUMOylation affects the interaction with Cav3.2 channels.

It is found in the cytoplasm. Its subcellular location is the stress granule. The protein resides in the nucleus. The catalysed reaction is Thiol-dependent hydrolysis of ester, thioester, amide, peptide and isopeptide bonds formed by the C-terminal Gly of ubiquitin (a 76-residue protein attached to proteins as an intracellular targeting signal).. Its function is as follows. Deubiquitinating enzyme that participates in a wide range of cellular processes by specifically cleaving isopeptide bonds between ubiquitin and substrate proteins or ubiquitin itself. Affects thereby important cellular signaling pathways such as NF-kappa-B, Wnt/beta-catenin, and cytokine production by regulating ubiquitin-dependent protein degradation. Participates in the activation of the Wnt signaling pathway by promoting FOXM1 deubiquitination and stabilization that induces the recruitment of beta-catenin to Wnt target gene promoter. Regulates the assembly and disassembly of heat-induced stress granules by mediating the hydrolysis of unanchored ubiquitin chains. Promotes lipopolysaccharide-induced apoptosis and inflammatory response by stabilizing the TXNIP protein. Affects T-cell biology by stabilizing the inhibitory receptor on T-cells PDC1. Acts as a negative regulator of autophagy by regulating ULK1 at both protein and mRNA levels. Acts also as a negative regulator of type I interferon production by simultaneously removing both 'Lys-48'-linked unanchored and 'Lys-63'-linked anchored polyubiquitin chains on the transcription factor IRF3. Modulates the stability of DNA mismatch repair protein MLH1 and counteracts the effect of the ubiquitin ligase UBR4. Upon activation by insulin, it gets phosphorylated through mTORC1-mediated phosphorylation to enhance YTHDF1 stability by removing 'Lys-11'-linked polyubiquitination. May also deubiquitinate other substrates such as the calcium channel CACNA1H. The polypeptide is Ubiquitin carboxyl-terminal hydrolase 5 (UBP5) (Pongo abelii (Sumatran orangutan)).